The sequence spans 318 residues: Nisin-resistance protein (318 aa).

Residues 7–28 (ILLGLVAVCALFLGIIYLWGYK) traverse the membrane as a helical segment.

It localises to the cell membrane. This Lactococcus lactis subsp. lactis (Streptococcus lactis) protein is Nisin-resistance protein (nsr).